The primary structure comprises 1030 residues: Beta-galactosidase (1030 aa).

Positions 99 and 197 each coordinate substrate. D197 is a Na(+) binding site. Mg(2+) is bound by residues E411, H413, and E456. Substrate contacts are provided by residues E456 and 532-535 (EYAH). E456 acts as the Proton donor in catalysis. E532 functions as the Nucleophile in the catalytic mechanism. A Mg(2+)-binding site is contributed by N592. Residues F596 and N599 each coordinate Na(+). The substrate site is built by N599 and W1004.

Belongs to the glycosyl hydrolase 2 family. In terms of assembly, homotetramer. Mg(2+) serves as cofactor. Requires Na(+) as cofactor.

It carries out the reaction Hydrolysis of terminal non-reducing beta-D-galactose residues in beta-D-galactosides.. The chain is Beta-galactosidase from Photobacterium profundum (strain SS9).